Consider the following 394-residue polypeptide: Cysteine protease ATG4B (394 aa).

Cys74 acts as the Nucleophile in catalysis. Catalysis depends on residues Asp280 and His282. The short motif at 389–392 (FEIL) is the LIR element.

It belongs to the peptidase C54 family.

It localises to the cytoplasm. Its subcellular location is the cytosol. The protein resides in the cytoplasmic vesicle. The protein localises to the autophagosome. It is found in the endoplasmic reticulum. It localises to the mitochondrion. The catalysed reaction is [protein]-C-terminal L-amino acid-glycyl-phosphatidylethanolamide + H2O = [protein]-C-terminal L-amino acid-glycine + a 1,2-diacyl-sn-glycero-3-phosphoethanolamine. It catalyses the reaction [protein]-C-terminal L-amino acid-glycyl-phosphatidylserine + H2O = [protein]-C-terminal L-amino acid-glycine + a 1,2-diacyl-sn-glycero-3-phospho-L-serine. In terms of biological role, cysteine protease that plays a key role in autophagy by mediating both proteolytic activation and delipidation of ATG8 family proteins. Required for canonical autophagy (macroautophagy), non-canonical autophagy as well as for mitophagy. The protease activity is required for proteolytic activation of ATG8 family proteins: cleaves the C-terminal amino acid of ATG8 proteins to reveal a C-terminal glycine. Exposure of the glycine at the C-terminus is essential for ATG8 proteins conjugation to phosphatidylethanolamine (PE) and insertion to membranes, which is necessary for autophagy. Protease activity is also required to counteract formation of high-molecular weight conjugates of ATG8 proteins (ATG8ylation): acts as a deubiquitinating-like enzyme that removes ATG8 conjugated to other proteins, such as ATG3. In addition to the protease activity, also mediates delipidation of ATG8 family proteins. Catalyzes delipidation of PE-conjugated forms of ATG8 proteins during macroautophagy. Also involved in non-canonical autophagy, a parallel pathway involving conjugation of ATG8 proteins to single membranes at endolysosomal compartments, by catalyzing delipidation of ATG8 proteins conjugated to phosphatidylserine (PS). The chain is Cysteine protease ATG4B from Danio rerio (Zebrafish).